Consider the following 58-residue polypeptide: Small ribosomal subunit protein bS21 (58 aa).

The interval Gly-27–Tyr-58 is disordered. The span at Glu-31–Ser-42 shows a compositional bias: basic and acidic residues. The segment covering Val-43–Tyr-58 has biased composition (basic residues).

It belongs to the bacterial ribosomal protein bS21 family.

The protein is Small ribosomal subunit protein bS21 (rpsU) of Lactococcus lactis subsp. lactis (strain IL1403) (Streptococcus lactis).